Consider the following 210-residue polypeptide: Molybdenum cofactor guanylyltransferase (210 aa).

GTP contacts are provided by residues 14 to 16 (LAG), Lys27, Asn55, Asp73, and Asp108. Asp108 is a Mg(2+) binding site.

Belongs to the MobA family. As to quaternary structure, monomer. Mg(2+) is required as a cofactor.

It is found in the cytoplasm. The catalysed reaction is Mo-molybdopterin + GTP + H(+) = Mo-molybdopterin guanine dinucleotide + diphosphate. Transfers a GMP moiety from GTP to Mo-molybdopterin (Mo-MPT) cofactor (Moco or molybdenum cofactor) to form Mo-molybdopterin guanine dinucleotide (Mo-MGD) cofactor. The polypeptide is Molybdenum cofactor guanylyltransferase (Rhodopseudomonas palustris (strain BisB5)).